Consider the following 171-residue polypeptide: 3-hydroxydecanoyl-[acyl-carrier-protein] dehydratase (171 aa).

Histidine 70 is a catalytic residue.

This sequence belongs to the thioester dehydratase family. FabA subfamily. Homodimer.

It is found in the cytoplasm. It carries out the reaction a (3R)-hydroxyacyl-[ACP] = a (2E)-enoyl-[ACP] + H2O. The catalysed reaction is (3R)-hydroxydecanoyl-[ACP] = (2E)-decenoyl-[ACP] + H2O. The enzyme catalyses (2E)-decenoyl-[ACP] = (3Z)-decenoyl-[ACP]. It participates in lipid metabolism; fatty acid biosynthesis. Necessary for the introduction of cis unsaturation into fatty acids. Catalyzes the dehydration of (3R)-3-hydroxydecanoyl-ACP to E-(2)-decenoyl-ACP and then its isomerization to Z-(3)-decenoyl-ACP. Can catalyze the dehydratase reaction for beta-hydroxyacyl-ACPs with saturated chain lengths up to 16:0, being most active on intermediate chain length. The protein is 3-hydroxydecanoyl-[acyl-carrier-protein] dehydratase of Methylococcus capsulatus (strain ATCC 33009 / NCIMB 11132 / Bath).